Reading from the N-terminus, the 414-residue chain is Na(+)/H(+) antiporter NhaA (414 aa).

11 consecutive transmembrane segments (helical) span residues 22–42, 61–81, 101–121, 131–151, 171–191, 215–235, 239–259, 281–301, 308–328, 343–363, and 379–399; these read VGGF…NSPF, LHLT…FFVV, MLPI…YAAF, GWGI…AVVG, LGAI…LPLI, SAAL…WALV, GVHA…VPLA, VLPV…LGAV, LGII…GSWV, WIDI…SLLI, and KAGV…VLAV.

The protein belongs to the NhaA Na(+)/H(+) (TC 2.A.33) antiporter family.

The protein resides in the cell membrane. The enzyme catalyses Na(+)(in) + 2 H(+)(out) = Na(+)(out) + 2 H(+)(in). Na(+)/H(+) antiporter that extrudes sodium in exchange for external protons. The polypeptide is Na(+)/H(+) antiporter NhaA (Thermobifida fusca (strain YX)).